Reading from the N-terminus, the 468-residue chain is Argininosuccinate lyase (468 aa).

It belongs to the lyase 1 family. Argininosuccinate lyase subfamily.

The protein localises to the cytoplasm. It carries out the reaction 2-(N(omega)-L-arginino)succinate = fumarate + L-arginine. It participates in amino-acid biosynthesis; L-arginine biosynthesis; L-arginine from L-ornithine and carbamoyl phosphate: step 3/3. This Cutibacterium acnes (strain DSM 16379 / KPA171202) (Propionibacterium acnes) protein is Argininosuccinate lyase.